The primary structure comprises 118 residues: Mediator of RNA polymerase II transcription subunit 11 (118 aa).

This sequence belongs to the Mediator complex subunit 11 family. Component of the Mediator complex.

It localises to the nucleus. Functionally, component of the Mediator complex, a coactivator involved in the regulated transcription of nearly all RNA polymerase II-dependent genes. Mediator functions as a bridge to convey information from gene-specific regulatory proteins to the basal RNA polymerase II transcription machinery. Mediator is recruited to promoters by direct interactions with regulatory proteins and serves as a scaffold for the assembly of a functional pre-initiation complex with RNA polymerase II and the general transcription factors. This Xenopus tropicalis (Western clawed frog) protein is Mediator of RNA polymerase II transcription subunit 11 (med11).